The sequence spans 591 residues: Developmental and secondary metabolism regulator VEA1 (591 aa).

Residues 1–22 (MATKASSILHPPNETEHTMSRI) are disordered. Residues 13 to 22 (NETEHTMSRI) show a composition bias toward basic and acidic residues. Residues 26 to 235 (GKKLTYNLKV…AEQGCRVRIR (210 aa)) enclose the Velvet domain. The Nuclear localization signal signature appears at 40–45 (ERARAC). A disordered region spans residues 238–547 (VRMRRREPKP…TSGGSDDEIM (310 aa)). Residues 245-260 (PKPNKDYGAYDDRRIT) show a composition bias toward basic and acidic residues. Residues 306–321 (HQQPSPNLAATPQSHL) show a composition bias toward polar residues. Residues 330–347 (YHAPPPPPTAHPAPPPAY) are compositionally biased toward pro residues. The segment covering 386–395 (YDQSKSSLPM) has biased composition (polar residues). Residues 422–433 (PSQLHPTQQYQQ) are compositionally biased toward low complexity. Pro residues predominate over residues 434-448 (PTPPPPPPAAIAPHP). The PEST stretch occupies residues 452-493 (RTPTKPSPSTFFPPTPSRLSVEVDSSNEADDAILNAIRTRRG). Residues 494–516 (YILDEKSGATKRSRDSSDHDLKP) show a composition bias toward basic and acidic residues.

The protein belongs to the velvet family. VeA subfamily. As to quaternary structure, component of the heterotrimeric velvet complex composed of LAE1, VEA1 and VEL2; VEA1 acting as a bridging protein between LAE1 and VEL2.

Its subcellular location is the nucleus. The protein localises to the cytoplasm. Its function is as follows. Component of the velvet transcription factor complex that controls sexual/asexual developmental ratio in response to light, promoting sexual development in the darkness while stimulating asexual sporulation under illumination. The velvet complex hat acts as a global regulator for secondary metabolite gene expression. Regulates cleistothecial formation and hyphal growth. Acts as a positive regulator of virulence. The protein is Developmental and secondary metabolism regulator VEA1 of Ajellomyces capsulatus (Darling's disease fungus).